The sequence spans 195 residues: Heterogeneous nuclear ribonucleoprotein A/B (195 aa).

The tract at residues 1 to 23 is disordered; that stretch reads EEVADGQAHGEXVYREEHHEGEK. Residues 12-23 show a composition bias toward basic and acidic residues; it reads XVYREEHHEGEK. Residues 32 to 48 form the RRM domain; that stretch reads EETKLFVGALSWETTEK. 2 positions are modified to asymmetric dimethylarginine: Arg-119 and Arg-122. The residue at position 173 (Ser-173) is a Phosphoserine; by CK2.

Extensively phosphorylated on tyrosine residues.

Its subcellular location is the cytoplasm. The protein resides in the nucleus. Its function is as follows. May regulate mRNA translation and stability. It binds to poly(A) and poly(U) regions of RNA. This binding is inhibited when the protein is phosphorylated. This chain is Heterogeneous nuclear ribonucleoprotein A/B, found in Artemia salina (Brine shrimp).